A 159-amino-acid chain; its full sequence is U1 small nuclear ribonucleoprotein C (159 aa).

Residues 4 to 36 (FYCDYCDTYLTHDSPSVRKTHCSGRKHKENVKD) form a Matrin-type zinc finger. Position 8 is a phosphotyrosine (Tyr-8). At Ser-17 the chain carries Phosphoserine. At Lys-52 the chain carries N6-acetyllysine. The tract at residues 62–96 (IPPAPFSAPPPAGAMIPPPPSLPGPPRPGMMPAPH) is disordered. Over residues 63-92 (PPAPFSAPPPAGAMIPPPPSLPGPPRPGMM) the composition is skewed to pro residues.

The protein belongs to the U1 small nuclear ribonucleoprotein C family. Component of the U1 snRNP. The U1 snRNP is composed of the U1 snRNA and the 7 core Sm proteins SNRPB, SNRPD1, SNRPD2, SNRPD3, SNRPE, SNRPF and SNRPG that assemble in a heptameric protein ring on the Sm site of the small nuclear RNA to form the core snRNP, and at least 3 U1 snRNP-specific proteins SNRNP70/U1-70K, SNRPA/U1-A and SNRPC/U1-C. SNRPC/U1-C interacts with U1 snRNA and the 5' splice-site region of the pre-mRNA. Interacts (via N-terminus) with TIA1 (via C-terminus); thereby promoting spliceosomal U1 snRNP recruitment to 5' splice sites.

Its subcellular location is the nucleus. Functionally, component of the spliceosomal U1 snRNP, which is essential for recognition of the pre-mRNA 5' splice-site and the subsequent assembly of the spliceosome. SNRPC/U1-C is directly involved in initial 5' splice-site recognition for both constitutive and regulated alternative splicing. The interaction with the 5' splice-site seems to precede base-pairing between the pre-mRNA and the U1 snRNA. Stimulates commitment or early (E) complex formation by stabilizing the base pairing of the 5' end of the U1 snRNA and the 5' splice-site region. The chain is U1 small nuclear ribonucleoprotein C from Rattus norvegicus (Rat).